The sequence spans 141 residues: Nucleoside diphosphate kinase (141 aa).

ATP contacts are provided by lysine 11, phenylalanine 59, arginine 87, threonine 93, arginine 104, and asparagine 114. The active-site Pros-phosphohistidine intermediate is histidine 117.

Belongs to the NDK family. In terms of assembly, homotetramer. The cofactor is Mg(2+).

Its subcellular location is the cytoplasm. The enzyme catalyses a 2'-deoxyribonucleoside 5'-diphosphate + ATP = a 2'-deoxyribonucleoside 5'-triphosphate + ADP. It carries out the reaction a ribonucleoside 5'-diphosphate + ATP = a ribonucleoside 5'-triphosphate + ADP. Functionally, major role in the synthesis of nucleoside triphosphates other than ATP. The ATP gamma phosphate is transferred to the NDP beta phosphate via a ping-pong mechanism, using a phosphorylated active-site intermediate. This chain is Nucleoside diphosphate kinase, found in Halorhodospira halophila (strain DSM 244 / SL1) (Ectothiorhodospira halophila (strain DSM 244 / SL1)).